The sequence spans 246 residues: Octanoyltransferase (246 aa).

In terms of domain architecture, BPL/LPL catalytic spans 30 to 227 (GRIGNTLLLL…QFGRVFGHQV (198 aa)). Residues 75 to 82 (RGGDVTYH), 155 to 157 (AIG), and 168 to 170 (GFA) each bind substrate. Cysteine 186 functions as the Acyl-thioester intermediate in the catalytic mechanism.

It belongs to the LipB family.

Its subcellular location is the cytoplasm. It catalyses the reaction octanoyl-[ACP] + L-lysyl-[protein] = N(6)-octanoyl-L-lysyl-[protein] + holo-[ACP] + H(+). It functions in the pathway protein modification; protein lipoylation via endogenous pathway; protein N(6)-(lipoyl)lysine from octanoyl-[acyl-carrier-protein]: step 1/2. Catalyzes the transfer of endogenously produced octanoic acid from octanoyl-acyl-carrier-protein onto the lipoyl domains of lipoate-dependent enzymes. Lipoyl-ACP can also act as a substrate although octanoyl-ACP is likely to be the physiological substrate. The protein is Octanoyltransferase of Acidobacterium capsulatum (strain ATCC 51196 / DSM 11244 / BCRC 80197 / JCM 7670 / NBRC 15755 / NCIMB 13165 / 161).